A 251-amino-acid polypeptide reads, in one-letter code: Triosephosphate isomerase (251 aa).

Residue 9 to 11 participates in substrate binding; that stretch reads NWK. The active-site Electrophile is His-94. The Proton acceptor role is filled by Glu-166. Substrate-binding positions include Gly-172, Ser-211, and 232 to 233; that span reads GG.

This sequence belongs to the triosephosphate isomerase family. As to quaternary structure, homodimer.

It is found in the cytoplasm. The enzyme catalyses D-glyceraldehyde 3-phosphate = dihydroxyacetone phosphate. It functions in the pathway carbohydrate biosynthesis; gluconeogenesis. It participates in carbohydrate degradation; glycolysis; D-glyceraldehyde 3-phosphate from glycerone phosphate: step 1/1. Involved in the gluconeogenesis. Catalyzes stereospecifically the conversion of dihydroxyacetone phosphate (DHAP) to D-glyceraldehyde-3-phosphate (G3P). The chain is Triosephosphate isomerase from Xanthomonas euvesicatoria pv. vesicatoria (strain 85-10) (Xanthomonas campestris pv. vesicatoria).